Here is a 197-residue protein sequence, read N- to C-terminus: Phosphoheptose isomerase (197 aa).

The region spanning 37 to 197 is the SIS domain; sequence MLQCLMNDGK…CIDSVLLEGM (161 aa). 52–54 contacts substrate; it reads NGG. Residues histidine 61 and glutamate 65 each coordinate Zn(2+). Residues glutamate 65, 94 to 95, 120 to 122, serine 125, and glutamine 175 contribute to the substrate site; these read ND and STS. Zn(2+) contacts are provided by glutamine 175 and histidine 183.

The protein belongs to the SIS family. GmhA subfamily. Homotetramer. Zn(2+) serves as cofactor.

It is found in the cytoplasm. It catalyses the reaction 2 D-sedoheptulose 7-phosphate = D-glycero-alpha-D-manno-heptose 7-phosphate + D-glycero-beta-D-manno-heptose 7-phosphate. The protein operates within carbohydrate biosynthesis; D-glycero-D-manno-heptose 7-phosphate biosynthesis; D-glycero-alpha-D-manno-heptose 7-phosphate and D-glycero-beta-D-manno-heptose 7-phosphate from sedoheptulose 7-phosphate: step 1/1. Its function is as follows. Catalyzes the isomerization of sedoheptulose 7-phosphate in D-glycero-D-manno-heptose 7-phosphate. The protein is Phosphoheptose isomerase of Neisseria meningitidis serogroup C (strain 053442).